A 162-amino-acid polypeptide reads, in one-letter code: MSINATARSLLLTEFISAFFLTMRYFFKPKPTINYPFEKNPISPRFRGEHALRRYPNGEERCIACKLCEAVCPAQAITIEAGPRRNDGTRRTVRYDIDMVKCIYCGLCQEACPVDAIVEGPNFEFATETREELYYDKAKLLANGDRWEREIAKAIELDAPYR.

2 consecutive 4Fe-4S ferredoxin-type domains span residues 52–82 (LRRYPNGEERCIACKLCEAVCPAQAITIEAG) and 93–122 (VRYDIDMVKCIYCGLCQEACPVDAIVEGPN). Positions 62, 65, 68, 72, 102, 105, 108, and 112 each coordinate [4Fe-4S] cluster.

It belongs to the complex I 23 kDa subunit family. As to quaternary structure, NDH-1 is composed of 14 different subunits. Subunits NuoA, H, J, K, L, M, N constitute the membrane sector of the complex. [4Fe-4S] cluster is required as a cofactor.

Its subcellular location is the cell inner membrane. It catalyses the reaction a quinone + NADH + 5 H(+)(in) = a quinol + NAD(+) + 4 H(+)(out). In terms of biological role, NDH-1 shuttles electrons from NADH, via FMN and iron-sulfur (Fe-S) centers, to quinones in the respiratory chain. The immediate electron acceptor for the enzyme in this species is believed to be ubiquinone. Couples the redox reaction to proton translocation (for every two electrons transferred, four hydrogen ions are translocated across the cytoplasmic membrane), and thus conserves the redox energy in a proton gradient. This is NADH-quinone oxidoreductase subunit I from Nitrobacter winogradskyi (strain ATCC 25391 / DSM 10237 / CIP 104748 / NCIMB 11846 / Nb-255).